The sequence spans 147 residues: Lysozyme C-3 (147 aa).

The first 18 residues, 1-18 (MKALVILGLLFLSVAVQG), serve as a signal peptide directing secretion. One can recognise a C-type lysozyme domain in the interval 19 to 147 (KVFERCELAR…VSSYVEGCKL (129 aa)). Cystine bridges form between C24-C145, C48-C133, C83-C99, and C95-C113. Residues E53 and D71 contribute to the active site.

Belongs to the glycosyl hydrolase 22 family. In terms of assembly, monomer. Expressed in stomach.

The protein resides in the secreted. It catalyses the reaction Hydrolysis of (1-&gt;4)-beta-linkages between N-acetylmuramic acid and N-acetyl-D-glucosamine residues in a peptidoglycan and between N-acetyl-D-glucosamine residues in chitodextrins.. Functionally, lysozymes have primarily a bacteriolytic function; those in tissues and body fluids are associated with the monocyte-macrophage system and enhance the activity of immunoagents. The polypeptide is Lysozyme C-3 (Ovis aries (Sheep)).